The chain runs to 562 residues: Potassium-transporting ATPase potassium-binding subunit (562 aa).

Helical transmembrane passes span 5–25 (GILA…PLGG), 65–85 (AYLR…YAVF), 135–155 (IGIT…AMAF), 181–201 (LLLP…VPET), 257–277 (ILEI…AGHF), 283–303 (LAIV…YIVY), 331–351 (FGLP…TGAV), 358–378 (LMPL…IFGG), 381–401 (VGLL…GLMV), 422–442 (AAML…MALP), 486–506 (ISIG…MLAI), and 528–548 (FAFG…TFFP).

Belongs to the KdpA family. The system is composed of three essential subunits: KdpA, KdpB and KdpC.

The protein localises to the cell membrane. Functionally, part of the high-affinity ATP-driven potassium transport (or Kdp) system, which catalyzes the hydrolysis of ATP coupled with the electrogenic transport of potassium into the cytoplasm. This subunit binds the extracellular potassium ions and delivers the ions to the membrane domain of KdpB through an intramembrane tunnel. The sequence is that of Potassium-transporting ATPase potassium-binding subunit from Alicyclobacillus acidocaldarius subsp. acidocaldarius (strain ATCC 27009 / DSM 446 / BCRC 14685 / JCM 5260 / KCTC 1825 / NBRC 15652 / NCIMB 11725 / NRRL B-14509 / 104-IA) (Bacillus acidocaldarius).